A 351-amino-acid polypeptide reads, in one-letter code: sn-glycerol-3-phosphate import ATP-binding protein UgpC (351 aa).

The 231-residue stretch at 4 to 234 (ITLDNLVKAY…PATTFVAGFI (231 aa)) folds into the ABC transporter domain. Position 36-43 (36-43 (GPSGCGKS)) interacts with ATP.

Belongs to the ABC transporter superfamily. sn-glycerol-3-phosphate importer (TC 3.A.1.1.3) family. As to quaternary structure, the complex is composed of two ATP-binding proteins (UgpC), two transmembrane proteins (UgpA and UgpE) and a solute-binding protein (UgpB).

It localises to the cell inner membrane. The catalysed reaction is sn-glycerol 3-phosphate(out) + ATP + H2O = sn-glycerol 3-phosphate(in) + ADP + phosphate + H(+). Its function is as follows. Part of the ABC transporter complex UgpBAEC involved in sn-glycerol-3-phosphate (G3P) import. Responsible for energy coupling to the transport system. The sequence is that of sn-glycerol-3-phosphate import ATP-binding protein UgpC from Ruegeria pomeroyi (strain ATCC 700808 / DSM 15171 / DSS-3) (Silicibacter pomeroyi).